The following is a 494-amino-acid chain: Serine/threonine-protein kinase cst-1 (494 aa).

The segment at 1–27 (MPPSTDSSRRNSEEGFSDGFKLDSSAL) is disordered. Residues 35–286 (FDIVGKLGEG…ALRLCEHTFI (252 aa)) form the Protein kinase domain. ATP contacts are provided by residues 41–49 (LGEGSYGSV) and Lys-64. The active-site Proton acceptor is Asp-154. The tract at residues 364–413 (IPKSAYGSSRNNGSPRVQPPGHTASACDPSNNPPFAEEGTGPNFQIGTSE) is disordered. A compositionally biased stretch (polar residues) spans 369 to 378 (YGSSRNNGSP). Residues 443 to 490 (FEFLRNITLDELIRRKESLDSEMEEEIRELQRRYKTKRQPILDVIEIK) form the SARAH domain.

It belongs to the protein kinase superfamily. STE Ser/Thr protein kinase family. STE20 subfamily. It depends on Mg(2+) as a cofactor. Proteolytically cleaved by caspase-3 during apoptosis which results in kinase activation.

The enzyme catalyses L-seryl-[protein] + ATP = O-phospho-L-seryl-[protein] + ADP + H(+). It catalyses the reaction L-threonyl-[protein] + ATP = O-phospho-L-threonyl-[protein] + ADP + H(+). Functionally, serine/threonine-protein kinase which extends lifespan and delays tissue aging, probably by activating daf-16. The protein is Serine/threonine-protein kinase cst-1 (cst-1) of Caenorhabditis briggsae.